We begin with the raw amino-acid sequence, 71 residues long: UPF0346 protein SAK_1533 (71 aa).

Belongs to the UPF0346 family.

This is UPF0346 protein SAK_1533 from Streptococcus agalactiae serotype Ia (strain ATCC 27591 / A909 / CDC SS700).